Here is a 239-residue protein sequence, read N- to C-terminus: MSRDPILSLPWPDARPLPDTFFDRDALLVARELLGKVIRHRQGNLWLAARIIETEAYYLEEKGSHASLGYTEKRKALFLDGGHIYMYYARGGDSLNFSAGGPGNAVLIKSGHPWLDRISDHAALERMQNLNPDSQGRPREIGRLCAGQTLLCKAMGLKVPEWDAQRFDPQRLFVDDVGERPSQVIQAARLGIPKGRDEHLPYRFVDAAFAAFCTRNPLRRGQVAGRDYHLLGHQDPHLQ.

The protein belongs to the DNA glycosylase MPG family.

This Pseudomonas aeruginosa (strain UCBPP-PA14) protein is Putative 3-methyladenine DNA glycosylase.